The following is a 347-amino-acid chain: Dihydroorotate dehydrogenase (quinone) (347 aa).

FMN-binding positions include 65–69 and T89; that span reads AGLDK. K69 contacts substrate. Residue 114 to 118 coordinates substrate; that stretch reads NRMGF. The FMN site is built by N146 and N179. N179 is a binding site for substrate. The active-site Nucleophile is the S182. N184 lines the substrate pocket. The FMN site is built by K224 and T252. Position 253 to 254 (253 to 254) interacts with substrate; the sequence is NT. FMN contacts are provided by residues G275, G304, and 325–326; that span reads YT.

This sequence belongs to the dihydroorotate dehydrogenase family. Type 2 subfamily. In terms of assembly, monomer. FMN serves as cofactor.

Its subcellular location is the cell membrane. The enzyme catalyses (S)-dihydroorotate + a quinone = orotate + a quinol. It participates in pyrimidine metabolism; UMP biosynthesis via de novo pathway; orotate from (S)-dihydroorotate (quinone route): step 1/1. Functionally, catalyzes the conversion of dihydroorotate to orotate with quinone as electron acceptor. The polypeptide is Dihydroorotate dehydrogenase (quinone) (Herminiimonas arsenicoxydans).